Reading from the N-terminus, the 175-residue chain is SKP1-like protein 20 (175 aa).

Positions 117 to 175 (ILAANYLNIKGLLDLTCQTVADMIKGKTPEEIRKTFNIKNDFTPEEEEEVRRENQWAFE) are interaction with the F-box domain of F-box proteins.

Belongs to the SKP1 family. As to quaternary structure, part of a SCF (SKP1-CUL1-F-box protein) E3 ubiquitin-protein ligase complex. Interacts with rice black streaked dwarf virus RBSDV protein P7-2. Is able to form the SCF complex together with CUL1 and the viral P7-2 protein. Interacts with D3.

The protein resides in the nucleus. Its pathway is protein modification; protein ubiquitination. Functionally, involved in ubiquitination and subsequent proteasomal degradation of target proteins. Together with CUL1, a RING-box and a F-box protein, it forms a SCF E3 ubiquitin ligase complex. The functional specificity of this complex depends on the type of F-box protein. In the SCF complex, it serves as an adapter that links the F-box protein to CUL1. This chain is SKP1-like protein 20, found in Oryza sativa subsp. japonica (Rice).